The following is a 609-amino-acid chain: Probable ubiquitin-conjugating enzyme E2 25 (609 aa).

Disordered regions lie at residues 70–99 (EEDE…LDPE) and 151–185 (ADKE…SQFS). Residues 156–178 (ASSSKSSHANNGNNSSKKATKAS) are compositionally biased toward low complexity. A UBC core domain is found at 332–492 (DWAKRIQDEW…TFILSLKTMV (161 aa)). The active-site Glycyl thioester intermediate is the cysteine 418.

It belongs to the ubiquitin-conjugating enzyme family. As to expression, expressed in seeds, pistils, siliques, hypocotyls and leaves.

It catalyses the reaction S-ubiquitinyl-[E1 ubiquitin-activating enzyme]-L-cysteine + [E2 ubiquitin-conjugating enzyme]-L-cysteine = [E1 ubiquitin-activating enzyme]-L-cysteine + S-ubiquitinyl-[E2 ubiquitin-conjugating enzyme]-L-cysteine.. It participates in protein modification; protein ubiquitination. Accepts the ubiquitin from the E1 complex and catalyzes its covalent attachment to other proteins. The polypeptide is Probable ubiquitin-conjugating enzyme E2 25 (UBC25) (Arabidopsis thaliana (Mouse-ear cress)).